A 214-amino-acid polypeptide reads, in one-letter code: Adenylate kinase (214 aa).

10–15 (GAGKGT) provides a ligand contact to ATP. An NMP region spans residues 30–59 (STGDMLRAAVKAGTPLGLEAKKVMDAGQLV). Residues Thr31, Arg36, 57–59 (QLV), 85–88 (GFPR), and Gln92 each bind AMP. The LID stretch occupies residues 122–159 (GRRVHPGSGRVYHVVFNPPKVEGKDDVTGEDLAIRPDD). Residues Arg123 and 132-133 (VY) contribute to the ATP site. Residues Arg156 and Arg167 each coordinate AMP. Position 200 (Gln200) interacts with ATP.

Belongs to the adenylate kinase family. In terms of assembly, monomer.

It localises to the cytoplasm. The enzyme catalyses AMP + ATP = 2 ADP. It functions in the pathway purine metabolism; AMP biosynthesis via salvage pathway; AMP from ADP: step 1/1. Catalyzes the reversible transfer of the terminal phosphate group between ATP and AMP. Plays an important role in cellular energy homeostasis and in adenine nucleotide metabolism. The sequence is that of Adenylate kinase from Shewanella sp. (strain ANA-3).